Here is a 402-residue protein sequence, read N- to C-terminus: Argininosuccinate synthase (402 aa).

9-17 (AYSGGLDTS) is an ATP binding site. Tyr86 lines the L-citrulline pocket. Position 116 (Gly116) interacts with ATP. L-aspartate contacts are provided by Thr118, Asn122, and Asp123. Asn122 serves as a coordination point for L-citrulline. Residues Arg126, Ser174, Ser183, Glu259, and Tyr271 each coordinate L-citrulline.

The protein belongs to the argininosuccinate synthase family. Type 1 subfamily. Homotetramer.

Its subcellular location is the cytoplasm. It carries out the reaction L-citrulline + L-aspartate + ATP = 2-(N(omega)-L-arginino)succinate + AMP + diphosphate + H(+). Its pathway is amino-acid biosynthesis; L-arginine biosynthesis; L-arginine from L-ornithine and carbamoyl phosphate: step 2/3. The protein is Argininosuccinate synthase of Anoxybacillus flavithermus (strain DSM 21510 / WK1).